Consider the following 301-residue polypeptide: uncharacterized protein (301 aa).

Catalysis depends on charge relay system residues Ser44 and Tyr107. Catalysis depends on Tyr133, which acts as the Proton donor. Lys162 acts as the Schiff-base intermediate with substrate in catalysis.

The protein belongs to the DapA family. In terms of assembly, homotetramer.

It is found in the cytoplasm. This is an uncharacterized protein from Pyrobaculum islandicum (strain DSM 4184 / JCM 9189 / GEO3).